Consider the following 477-residue polypeptide: Bifunctional protein HldE (477 aa).

The segment at 1 to 318 (MKVTLPEFER…ENAVRGRADT (318 aa)) is ribokinase. Lysine 179 bears the N6-acetyllysine mark. Residue 195-198 (NLSE) participates in ATP binding. The active site involves aspartate 264. Residues 344–477 (MTNGVFDILH…IKKIQQDKKG (134 aa)) form a cytidylyltransferase region.

It in the N-terminal section; belongs to the carbohydrate kinase PfkB family. The protein in the C-terminal section; belongs to the cytidylyltransferase family. In terms of assembly, homodimer.

The catalysed reaction is D-glycero-beta-D-manno-heptose 7-phosphate + ATP = D-glycero-beta-D-manno-heptose 1,7-bisphosphate + ADP + H(+). It carries out the reaction D-glycero-beta-D-manno-heptose 1-phosphate + ATP + H(+) = ADP-D-glycero-beta-D-manno-heptose + diphosphate. Its pathway is nucleotide-sugar biosynthesis; ADP-L-glycero-beta-D-manno-heptose biosynthesis; ADP-L-glycero-beta-D-manno-heptose from D-glycero-beta-D-manno-heptose 7-phosphate: step 1/4. It functions in the pathway nucleotide-sugar biosynthesis; ADP-L-glycero-beta-D-manno-heptose biosynthesis; ADP-L-glycero-beta-D-manno-heptose from D-glycero-beta-D-manno-heptose 7-phosphate: step 3/4. Catalyzes the phosphorylation of D-glycero-D-manno-heptose 7-phosphate at the C-1 position to selectively form D-glycero-beta-D-manno-heptose-1,7-bisphosphate. In terms of biological role, catalyzes the ADP transfer from ATP to D-glycero-beta-D-manno-heptose 1-phosphate, yielding ADP-D-glycero-beta-D-manno-heptose. This Shigella sonnei (strain Ss046) protein is Bifunctional protein HldE.